The primary structure comprises 821 residues: Glycogen phosphorylase (821 aa).

N6-(pyridoxal phosphate)lysine is present on Lys667.

Belongs to the glycogen phosphorylase family. Requires pyridoxal 5'-phosphate as cofactor.

It carries out the reaction [(1-&gt;4)-alpha-D-glucosyl](n) + phosphate = [(1-&gt;4)-alpha-D-glucosyl](n-1) + alpha-D-glucose 1-phosphate. Functionally, phosphorylase is an important allosteric enzyme in carbohydrate metabolism. Enzymes from different sources differ in their regulatory mechanisms and in their natural substrates. However, all known phosphorylases share catalytic and structural properties. The sequence is that of Glycogen phosphorylase (glgP) from Haemophilus influenzae (strain ATCC 51907 / DSM 11121 / KW20 / Rd).